Consider the following 45-residue polypeptide: Large ribosomal subunit protein bL34c (45 aa).

Belongs to the bacterial ribosomal protein bL34 family.

Its subcellular location is the plastid. It localises to the chloroplast. The chain is Large ribosomal subunit protein bL34c from Emiliania huxleyi (Coccolithophore).